Reading from the N-terminus, the 436-residue chain is Protein PhoH2 (436 aa).

Residues 12 to 137 (RTYVLDTSVL…LVSKDLPMRL (126 aa)) form the PINc domain.

This sequence in the N-terminal section; belongs to the PINc/VapC protein family. In the C-terminal section; belongs to the PhoH family.

It catalyses the reaction n ATP + n H2O + wound RNA = n ADP + n phosphate + unwound RNA.. The enzyme catalyses ATP + H2O = ADP + phosphate + H(+). The catalysed reaction is GTP + H2O = GDP + phosphate + H(+). Its function is as follows. Unwinds and/or cleaves 5'-tailed RNA in vitro, the reaction is maximal with hydrolyzable ATP; double-stranded (ds)RNA and dsDNA are not unwound. Unlike the protein in mycobacteria there does not seem to be an antitoxin gene upstream, suggesting this is not a toxin-antitoxin system. Has ATPase and GTPase activities. The sequence is that of Protein PhoH2 from Thermobispora bispora (strain ATCC 19993 / DSM 43833 / CBS 139.67 / JCM 10125 / KCTC 9307 / NBRC 14880 / R51).